The sequence spans 372 residues: Glutamate 5-kinase (372 aa).

Lys14 is an ATP binding site. Ser54, Asp141, and Asn153 together coordinate substrate. Thr173 to Asp174 contacts ATP. The 79-residue stretch at Arg280–Met358 folds into the PUA domain.

The protein belongs to the glutamate 5-kinase family.

The protein localises to the cytoplasm. The enzyme catalyses L-glutamate + ATP = L-glutamyl 5-phosphate + ADP. It functions in the pathway amino-acid biosynthesis; L-proline biosynthesis; L-glutamate 5-semialdehyde from L-glutamate: step 1/2. In terms of biological role, catalyzes the transfer of a phosphate group to glutamate to form L-glutamate 5-phosphate. The polypeptide is Glutamate 5-kinase (Pseudomonas fluorescens (strain Pf0-1)).